We begin with the raw amino-acid sequence, 391 residues long: Multidrug resistance protein MdtL (391 aa).

Residues 1–3 (MSR) lie on the Cytoplasmic side of the membrane. A helical membrane pass occupies residues 4-24 (FLICSFALVLLYPAGIDMYLV). Residues 25 to 37 (GLPRIAADLNASE) lie on the Periplasmic side of the membrane. The chain crosses the membrane as a helical span at residues 38–58 (AQLHIAFSVYLAGMAAAMLFA). Residues 59–75 (GKMADRSGRKPVAIPGS) are Cytoplasmic-facing. Residues 76-96 (ALFIIASVFCSLAETSTLFLA) traverse the membrane as a helical segment. Residues 97–98 (GR) are Periplasmic-facing. Residues 99 to 119 (FLQGLGAGCCYVVAFAILRDT) form a helical membrane-spanning segment. At 120–130 (LDDRRRAKVLS) the chain is on the cytoplasmic side. Residues 131–151 (LLNGITCIIPVLAPVLGHLIM) traverse the membrane as a helical segment. Residues 152–157 (LKFPWQ) are Periplasmic-facing. The chain crosses the membrane as a helical span at residues 158–178 (SLFWAMAMMGIAVLMLSLFIL). The Cytoplasmic segment spans residues 179–202 (KETRPASPAASDKPRENSESLLNR). The chain crosses the membrane as a helical span at residues 203 to 222 (FFLSRVVITTLSVSVILTFV). Topologically, residues 223 to 244 (NTSPVLLMEIMGFERGEYATIM) are periplasmic. Residues 245–265 (ALTAGVSMTFSFSTPFALGIF) traverse the membrane as a helical segment. The Cytoplasmic segment spans residues 266 to 268 (KPR). A helical membrane pass occupies residues 269 to 289 (TLMITSQVLFLAAGITLAVSP). Residues 290 to 292 (SHA) are Periplasmic-facing. The helical transmembrane segment at 293 to 313 (VSLFGITLICAGFSVGFGVAM) threads the bilayer. Topologically, residues 314–330 (SQALGPFSLRAGVASST) are cytoplasmic. The chain crosses the membrane as a helical span at residues 331-351 (LGIAQVCGSSLWIWLAAVVGI). Topologically, residues 352 to 355 (GAWN) are periplasmic. A helical transmembrane segment spans residues 356–376 (MLIGILIACSIVSLLLIMFVA). Residues 377 to 391 (PGRPVAAHEEIHHHA) are Cytoplasmic-facing.

The protein belongs to the major facilitator superfamily. DHA1 family. MdtL (TC 2.A.1.2.22) subfamily.

It is found in the cell inner membrane. This chain is Multidrug resistance protein MdtL, found in Shigella flexneri serotype 5b (strain 8401).